The chain runs to 91 residues: Probable Fe(2+)-trafficking protein (91 aa).

It belongs to the Fe(2+)-trafficking protein family.

Its function is as follows. Could be a mediator in iron transactions between iron acquisition and iron-requiring processes, such as synthesis and/or repair of Fe-S clusters in biosynthetic enzymes. This is Probable Fe(2+)-trafficking protein from Cellvibrio japonicus (strain Ueda107) (Pseudomonas fluorescens subsp. cellulosa).